A 339-amino-acid polypeptide reads, in one-letter code: Protein FAM76B (339 aa).

At Ala2 the chain carries N-acetylalanine. Ser22 and Ser148 each carry phosphoserine. The segment at 144 to 243 (EQRKSLGSSH…INQSADSGGT (100 aa)) is disordered. Low complexity predominate over residues 148–160 (SLGSSHSNSSSSS). Over residues 167-189 (HHSKHHHHHHHHHHRHSSGHHKV) the composition is skewed to basic residues. Ser193 carries the phosphoserine modification. Position 215 is a phosphothreonine (Thr215). Residues 215-224 (TPKKKPKLES) are compositionally biased toward basic and acidic residues. The segment covering 228–243 (NGDSSSINQSADSGGT) has biased composition (polar residues). The stretch at 248-328 (LISQLKEEVM…QVAALSKGKK (81 aa)) forms a coiled coil.

This sequence belongs to the FAM76 family. As to quaternary structure, interacts with HNRNPA2B1 (via C-terminus); the interaction results in retention of HNRNPA2B1 in the nucleus and inhibition of the NF-kappa-B-mediated inflammatory pathway.

The protein resides in the nucleus speckle. Negatively regulates the NF-kappa-B-mediated inflammatory pathway by preventing the translocation of HNRNPA2B1 from the nucleus to the cytoplasm. Inhibits the PI3K/Akt/NF-kappa-B pathway-mediated polarization of M1 macrophages by binding to and stabilizing PIK3CD mRNA, resulting in increased levels of PIK3CD protein and increased levels of phosphorylated downstream target AKT which leads to decreased NF-kappa-B signaling. The protein is Protein FAM76B (Fam76b) of Mus musculus (Mouse).